The sequence spans 1073 residues: Ring-infected erythrocyte surface antigen (1073 aa).

The N-terminal stretch at 1-65 (MRPFHAYSWI…IIGILYIILN (65 aa)) is a signal peptide. N-linked (GlcNAc...) asparagine glycosylation occurs at Asn71. Residues 428-444 (DTSEEESVEENEEEHTV) are compositionally biased toward acidic residues. The tract at residues 428-514 (DTSEEESVEE…SDVQQTSEAA (87 aa)) is disordered. A tandem repeats 1 region spans residues 436–504 (EENEEEHTVD…VAEEHVEEPA (69 aa)). Residues 445-456 (DDEHVEEHTADD) show a composition bias toward basic and acidic residues. The span at 457–470 (EHVEEPTVADDEHV) shows a compositional bias: acidic residues. Positions 476 to 502 (ADEHVEEPTVAEEHVEEPTVAEEHVEE) are enriched in basic and acidic residues. The J domain occupies 521 to 589 (DTLYYDILGV…KRWYNKYGYD (69 aa)). Residues Asn639, Asn773, and Asn777 are each glycosylated (N-linked (GlcNAc...) asparagine). The interval 891–1073 (NAEENVEHDA…VEEHNEEYDE (183 aa)) is tandem repeats 2. Over residues 894–930 (ENVEHDAEENVEHDAEENVEHDAEENVEHDAEENVEH) the composition is skewed to basic and acidic residues. The segment at 894–1073 (ENVEHDAEEN…VEEHNEEYDE (180 aa)) is disordered. Acidic residues predominate over residues 931 to 1073 (DAEENVEENV…VEEHNEEYDE (143 aa)).

In terms of processing, the Tyr residues in the variant tetrameric sequences in the RESA repeat are possibly phosphorylated (by homology with band 3).

The protein resides in the cell membrane. In terms of biological role, may disrupt the normal intermolecular interactions of the cytoplasmic domain of band 3 and thereby facilitate the invagination of the red cell membrane which is necessary for the formation of the parasitophorous vacuole. This Plasmodium falciparum (isolate FC27 / Papua New Guinea) protein is Ring-infected erythrocyte surface antigen (RESA).